Reading from the N-terminus, the 300-residue chain is MSTPFVTTLSSSLYGLLKDRLEEKGFILTQPQYTIFQARSPSVMCTLYSSGKLVVQGKGSKEFIEFFLEPEILLTFTHNRVEADLRPRLGVDESGKGDFFGPLCIAGVYARDEETLKSLYKTKIQDSKLLNDAQILSLAKTIRSSCTYDVMILYPEKYNELYGKFHNLNILLAWAHATIIDKLAPRPSGEVFAISDQFASSESVLLNALKKKNTDISVIQKVRAEQDIVVAAASILAREAFITTMTNLEQRFSLKLPKGASAQVKSVGKSILNSRGKEVLSLVCKTHFKTFNEICDSASA.

The region spanning 86 to 300 (RPRLGVDESG…FNEICDSASA (215 aa)) is the RNase H type-2 domain. Positions 92, 93, and 196 each coordinate a divalent metal cation.

It belongs to the RNase HII family. RnhC subfamily. It depends on Mn(2+) as a cofactor. Mg(2+) serves as cofactor.

It localises to the cytoplasm. The catalysed reaction is Endonucleolytic cleavage to 5'-phosphomonoester.. Functionally, endonuclease that specifically degrades the RNA of RNA-DNA hybrids. The polypeptide is Ribonuclease HIII (Chlamydia felis (strain Fe/C-56) (Chlamydophila felis)).